An 883-amino-acid chain; its full sequence is DNA topoisomerase 1 (883 aa).

Residues 2 to 126 enclose the Toprim domain; sequence PKLVIVESPT…TKRMVFHEIT (125 aa). Mg(2+)-binding residues include Glu8 and Asp95. In terms of domain architecture, Topo IA-type catalytic spans 141 to 583; it reads DQRLVHAQET…QFYRGDRGLE (443 aa). Residues 175–180 are interaction with DNA; the sequence is SAGRVQ. Residues 271-294 form a disordered region; the sequence is SLEEKPTTRKPAPPFTTSTLQQES. Tyr320 (O-(5'-phospho-DNA)-tyrosine intermediate) is an active-site residue. A disordered region spans residues 842 to 883; it reads AKAGQAKAKGGRRSTGTPKSGETKARTTKTTKKTTTRRTTSR. The span at 867-883 shows a compositional bias: basic residues; sequence RTTKTTKKTTTRRTTSR.

This sequence belongs to the type IA topoisomerase family. As to quaternary structure, monomer. Requires Mg(2+) as cofactor.

It carries out the reaction ATP-independent breakage of single-stranded DNA, followed by passage and rejoining.. Its function is as follows. Releases the supercoiling and torsional tension of DNA, which is introduced during the DNA replication and transcription, by transiently cleaving and rejoining one strand of the DNA duplex. Introduces a single-strand break via transesterification at a target site in duplex DNA. The scissile phosphodiester is attacked by the catalytic tyrosine of the enzyme, resulting in the formation of a DNA-(5'-phosphotyrosyl)-enzyme intermediate and the expulsion of a 3'-OH DNA strand. The free DNA strand then undergoes passage around the unbroken strand, thus removing DNA supercoils. Finally, in the religation step, the DNA 3'-OH attacks the covalent intermediate to expel the active-site tyrosine and restore the DNA phosphodiester backbone. The polypeptide is DNA topoisomerase 1 (Synechococcus elongatus (strain ATCC 33912 / PCC 7942 / FACHB-805) (Anacystis nidulans R2)).